The sequence spans 340 residues: N-acetyl-gamma-glutamyl-phosphate reductase (340 aa).

The active site involves Cys-146.

This sequence belongs to the NAGSA dehydrogenase family. Type 1 subfamily.

It localises to the cytoplasm. It catalyses the reaction N-acetyl-L-glutamate 5-semialdehyde + phosphate + NADP(+) = N-acetyl-L-glutamyl 5-phosphate + NADPH + H(+). It functions in the pathway amino-acid biosynthesis; L-arginine biosynthesis; N(2)-acetyl-L-ornithine from L-glutamate: step 3/4. Functionally, catalyzes the NADPH-dependent reduction of N-acetyl-5-glutamyl phosphate to yield N-acetyl-L-glutamate 5-semialdehyde. This is N-acetyl-gamma-glutamyl-phosphate reductase from Streptococcus thermophilus (strain CNRZ 1066).